Here is a 1181-residue protein sequence, read N- to C-terminus: C5a peptidase (1181 aa).

A signal peptide spans 1–31 (MRKKQKLPFDKLAIALMSTSILLNAQSDIKA). The segment covering 33 to 52 (TVTEDTPATEQAVETPQPTA) has biased composition (polar residues). The segment at 33–117 (TVTEDTPATE…PSQVKTLQEK (85 aa)) is disordered. A compositionally biased stretch (acidic residues) spans 70–81 (DDAEETIADDAN). The Peptidase S8 domain occupies 99-581 (KATIRDLNDP…AGAVDAKKAS (483 aa)). Catalysis depends on charge relay system residues aspartate 130, histidine 193, and serine 512. 4 stretches are compositionally biased toward basic and acidic residues: residues 1029–1054 (EGHS…KPEQ), 1061–1071 (PDKKPETKPEQ), 1078–1088 (PDKKPETKPEQ), and 1095–1107 (PDKK…EKDS). The interval 1029–1150 (EGHSNKPEQD…KDQLPTTNDK (122 aa)) is disordered. 5 tandem repeats follow at residues 1034 to 1050 (KPEQ…KPET), 1051 to 1067 (KPEQ…KPET), 1068 to 1084 (KPEQ…KPET), 1085 to 1101 (KPEQ…KPET), and 1102 to 1118 (KPEK…TPQK). A 5 X 17 AA tandem repeats region spans residues 1034–1118 (KPEQDGSDQA…GQTPGKTPQK (85 aa)). 2 stretches are compositionally biased toward polar residues: residues 1109–1123 (GQTP…QPSR) and 1137–1147 (KASTKDQLPTT). The short motif at 1144–1148 (LPTTN) is the LPXTG sorting signal element. Residue threonine 1147 is modified to Pentaglycyl murein peptidoglycan amidated threonine. A propeptide spans 1148–1181 (NDKDTNRLHLLKLVMTTFFLGLVAHIFKTKRTED) (removed by sortase).

Belongs to the peptidase S8 family. Post-translationally, cleaved by SpeB protease; leading to its degradation. Degradation by SpeB is probably strictly regulated to preserve integrity of C5a peptidase.

The protein localises to the secreted. It localises to the cell wall. It catalyses the reaction The primary cleavage site is at 67-His-|-Lys-68 in human C5a with a minor secondary cleavage site at 58-Ala-|-Ser-59.. This virulence factor of S.pyogenes specifically cleaves the human serum chemotaxin C5a at '68-Lys-|-Asp-69' bond near its C-terminus, destroying its ability to serve as a chemoattractant. The protein is C5a peptidase (scpA) of Streptococcus pyogenes serotype M1.